Here is a 430-residue protein sequence, read N- to C-terminus: Zinc carboxypeptidase A 1 (430 aa).

Positions methionine 1–alanine 22 are cleaved as a signal peptide. In terms of domain architecture, Peptidase M14 spans glutamine 124 to valine 423. Zn(2+) is bound by residues histidine 187 and glutamate 190. A disulfide bridge links cysteine 252 with cysteine 275. Zn(2+) is bound at residue histidine 311. The active-site Proton donor/acceptor is the glutamate 386.

The protein belongs to the peptidase M14 family. Zn(2+) serves as cofactor.

The protein resides in the secreted. The sequence is that of Zinc carboxypeptidase A 1 from Drosophila melanogaster (Fruit fly).